The following is a 182-amino-acid chain: Crossover junction endodeoxyribonuclease RuvC (182 aa).

Active-site residues include Asp7, Glu67, and Asp139. Residues Asp7, Glu67, and Asp139 each contribute to the Mg(2+) site.

The protein belongs to the RuvC family. As to quaternary structure, homodimer which binds Holliday junction (HJ) DNA. The HJ becomes 2-fold symmetrical on binding to RuvC with unstacked arms; it has a different conformation from HJ DNA in complex with RuvA. In the full resolvosome a probable DNA-RuvA(4)-RuvB(12)-RuvC(2) complex forms which resolves the HJ. Mg(2+) serves as cofactor.

The protein resides in the cytoplasm. It carries out the reaction Endonucleolytic cleavage at a junction such as a reciprocal single-stranded crossover between two homologous DNA duplexes (Holliday junction).. In terms of biological role, the RuvA-RuvB-RuvC complex processes Holliday junction (HJ) DNA during genetic recombination and DNA repair. Endonuclease that resolves HJ intermediates. Cleaves cruciform DNA by making single-stranded nicks across the HJ at symmetrical positions within the homologous arms, yielding a 5'-phosphate and a 3'-hydroxyl group; requires a central core of homology in the junction. The consensus cleavage sequence is 5'-(A/T)TT(C/G)-3'. Cleavage occurs on the 3'-side of the TT dinucleotide at the point of strand exchange. HJ branch migration catalyzed by RuvA-RuvB allows RuvC to scan DNA until it finds its consensus sequence, where it cleaves and resolves the cruciform DNA. In Bordetella pertussis (strain Tohama I / ATCC BAA-589 / NCTC 13251), this protein is Crossover junction endodeoxyribonuclease RuvC.